The following is a 65-amino-acid chain: Large ribosomal subunit protein uL30 (65 aa).

This sequence belongs to the universal ribosomal protein uL30 family. In terms of assembly, part of the 50S ribosomal subunit.

The chain is Large ribosomal subunit protein uL30 from Desulfosudis oleivorans (strain DSM 6200 / JCM 39069 / Hxd3) (Desulfococcus oleovorans).